The chain runs to 239 residues: Leucine rich adaptor protein 1 (239 aa).

2 LRR repeats span residues 55-83 and 93-114; these read LGDK…LVTL and LLEE…QYSL. Residues 107–118 are compositionally biased toward low complexity; the sequence is LTSSQYSLTGGS. Residues 107–140 form a disordered region; that stretch reads LTSSQYSLTGGSPERSRRGSWDSLPDTSSTDRLD. Phosphoserine is present on residues serine 118, serine 126, and serine 129.

Forms a tripartite complex with CDC42BPA/CDC42BPB and MYO18A acting as an adapter connecting both. Its binding to CDC42BPA/CDC42BPB results in their activation by abolition of their negative autoregulation. Interacts with CDC42BPA and CDC42BPB. Phosphorylated.

It localises to the cytoplasm. Acts as an activator of the canonical NF-kappa-B pathway and drive the production of pro-inflammatory cytokines. Promotes the antigen (Ag)-presenting and priming function of dendritic cells via the canonical NF-kappa-B pathway. In concert with MYO18A and CDC42BPA/CDC42BPB, is involved in modulating lamellar actomyosin retrograde flow that is crucial to cell protrusion and migration. Activates CDC42BPA/CDC42BPB and targets it to actomyosin through its interaction with MYO18A, leading to MYL9/MLC2 phosphorylation and MYH9/MYH10-dependent actomyosin assembly in the lamella. The polypeptide is Leucine rich adaptor protein 1 (Lurap1) (Rattus norvegicus (Rat)).